Consider the following 119-residue polypeptide: MIIGIGIDIVELERIEQLMMKNEKFIDRILTEEEKRIFFQLSPKRKVEFLAGRFAAKEAYAKAIGTGIGKNVSFHDIQIMNDDNGKPIVVSNGKDCRIHVSISHSRDYAIAQVIIERLS.

Mg(2+) is bound by residues aspartate 8 and glutamate 58.

Belongs to the P-Pant transferase superfamily. AcpS family. The cofactor is Mg(2+).

It localises to the cytoplasm. The catalysed reaction is apo-[ACP] + CoA = holo-[ACP] + adenosine 3',5'-bisphosphate + H(+). In terms of biological role, transfers the 4'-phosphopantetheine moiety from coenzyme A to a Ser of acyl-carrier-protein. This Geobacillus sp. (strain WCH70) protein is Holo-[acyl-carrier-protein] synthase.